A 225-amino-acid polypeptide reads, in one-letter code: Probable GTP-binding protein EngB (225 aa).

The EngB-type G domain maps to 40–224 (GPPEVAFAGR…RAAIVHAVTA (185 aa)). GTP contacts are provided by residues 48–55 (GRSNVGKS), 75–79 (GRTQE), 102–105 (DMPG), 169–172 (TKAD), and 203–205 (TSS). The Mg(2+) site is built by Ser55 and Thr77.

It belongs to the TRAFAC class TrmE-Era-EngA-EngB-Septin-like GTPase superfamily. EngB GTPase family. It depends on Mg(2+) as a cofactor.

Necessary for normal cell division and for the maintenance of normal septation. In Chelativorans sp. (strain BNC1), this protein is Probable GTP-binding protein EngB.